We begin with the raw amino-acid sequence, 189 residues long: Chitin synthase 3 (189 aa).

The protein belongs to the chitin synthase family. Class II subfamily.

The protein localises to the cell membrane. The enzyme catalyses [(1-&gt;4)-N-acetyl-beta-D-glucosaminyl](n) + UDP-N-acetyl-alpha-D-glucosamine = [(1-&gt;4)-N-acetyl-beta-D-glucosaminyl](n+1) + UDP + H(+). In terms of biological role, polymerizes chitin, a structural polymer of the cell wall and septum, by transferring the sugar moiety of UDP-GlcNAc to the non-reducing end of the growing chitin polymer. The chain is Chitin synthase 3 (CHS3) from Ajellomyces capsulatus (Darling's disease fungus).